The sequence spans 267 residues: Phosphatidylserine decarboxylase proenzyme (267 aa).

Active-site charge relay system; for autoendoproteolytic cleavage activity residues include D78, H132, and S236. The active-site Schiff-base intermediate with substrate; via pyruvic acid; for decarboxylase activity is the S236. S236 is modified (pyruvic acid (Ser); by autocatalysis).

This sequence belongs to the phosphatidylserine decarboxylase family. PSD-B subfamily. Prokaryotic type I sub-subfamily. In terms of assembly, heterodimer of a large membrane-associated beta subunit and a small pyruvoyl-containing alpha subunit. The cofactor is pyruvate. Post-translationally, is synthesized initially as an inactive proenzyme. Formation of the active enzyme involves a self-maturation process in which the active site pyruvoyl group is generated from an internal serine residue via an autocatalytic post-translational modification. Two non-identical subunits are generated from the proenzyme in this reaction, and the pyruvate is formed at the N-terminus of the alpha chain, which is derived from the carboxyl end of the proenzyme. The autoendoproteolytic cleavage occurs by a canonical serine protease mechanism, in which the side chain hydroxyl group of the serine supplies its oxygen atom to form the C-terminus of the beta chain, while the remainder of the serine residue undergoes an oxidative deamination to produce ammonia and the pyruvoyl prosthetic group on the alpha chain. During this reaction, the Ser that is part of the protease active site of the proenzyme becomes the pyruvoyl prosthetic group, which constitutes an essential element of the active site of the mature decarboxylase.

It localises to the cell membrane. It catalyses the reaction a 1,2-diacyl-sn-glycero-3-phospho-L-serine + H(+) = a 1,2-diacyl-sn-glycero-3-phosphoethanolamine + CO2. It functions in the pathway phospholipid metabolism; phosphatidylethanolamine biosynthesis; phosphatidylethanolamine from CDP-diacylglycerol: step 2/2. Catalyzes the formation of phosphatidylethanolamine (PtdEtn) from phosphatidylserine (PtdSer). The sequence is that of Phosphatidylserine decarboxylase proenzyme from Helicobacter pylori (strain Shi470).